The chain runs to 338 residues: Mitoferrin-1 (338 aa).

The segment at 1 to 42 (MELRSGSVGSQAVARRMDGDSRDGGGGKDATGSEDYENLPTS) is disordered. The segment covering 15–26 (RRMDGDSRDGGG) has biased composition (basic and acidic residues). Solcar repeat units lie at residues 43 to 131 (ASVS…MKRT), 141 to 225 (NSHL…LQEQ), and 232 to 326 (YNPQ…FKYF). 6 helical membrane-spanning segments follow: residues 45–64 (VSTH…SVMY), 106–125 (GVNV…FACY), 143–162 (HLAN…AVMN), 200–219 (SYTT…FITY), 234–253 (PQSH…AATT), and 301–320 (GIQA…WSVY).

The protein belongs to the mitochondrial carrier (TC 2.A.29) family. In terms of assembly, interacts with ACB10; this interaction stabilizes SLC25A37 and enhances the function of SLC25A37 to import mitochondrial iron during erythroid differentiation.

It is found in the mitochondrion inner membrane. The catalysed reaction is Fe(2+)(in) = Fe(2+)(out). Functionally, mitochondrial iron transporter that specifically mediates iron uptake in developing erythroid cells, thereby playing an essential role in heme biosynthesis. This chain is Mitoferrin-1 (SLC25A37), found in Homo sapiens (Human).